The primary structure comprises 34 residues: Potassium channel toxin alpha-KTx 6.2 (34 aa).

4 disulfides stabilise this stretch: C3-C24, C9-C29, C13-C19, and C31-C34. At C34 the chain carries Cysteine amide.

Belongs to the short scorpion toxin superfamily. Potassium channel inhibitor family. Alpha-KTx 06 subfamily. In terms of tissue distribution, expressed by the venom gland.

It is found in the secreted. In terms of biological role, blocks voltage-gated potassium channels Kv1.2/KCNA2 (IC(50)=0.12-0.8 nM), KCa3.1/KCNN4 (IC(50)=1-2.2 nM), Shaker B (IC(50)=2.39-80 nM), Kv1.1/KCNA1 (IC(50)=37-45 or no activity, depending on the study), Kv1.3/KCNA3 (IC(50)=150-180 or no activity, depending on the study). This is Potassium channel toxin alpha-KTx 6.2 from Scorpio palmatus (Israeli golden scorpion).